A 302-amino-acid chain; its full sequence is Cell division protein FtsQ (302 aa).

The interval 1 to 41 (MPAVVRGGPPKPRRPRAEAPASPSKGKPAPRKAQPAAKLHA) is disordered. Residues 1 to 50 (MPAVVRGGPPKPRRPRAEAPASPSKGKPAPRKAQPAAKLHAARGVGLSPT) lie on the Cytoplasmic side of the membrane. A compositionally biased stretch (low complexity) spans 18-38 (EAPASPSKGKPAPRKAQPAAK). The chain crosses the membrane as a helical span at residues 51–71 (VALSVAGAALGLGLVVMLATG). At 72-302 (HRAERLGASM…LPGQPAADGA (231 aa)) the chain is on the periplasmic side. The POTRA domain maps to 94 to 162 (FRLKTVHIRG…DTVLIAVEER (69 aa)).

It belongs to the FtsQ/DivIB family. FtsQ subfamily.

The protein localises to the cell inner membrane. Essential cell division protein. This Caulobacter vibrioides (strain ATCC 19089 / CIP 103742 / CB 15) (Caulobacter crescentus) protein is Cell division protein FtsQ.